The chain runs to 364 residues: DNA replication and repair protein RecF (364 aa).

30 to 37 (GANGSGKT) is an ATP binding site.

Belongs to the RecF family.

The protein resides in the cytoplasm. Its function is as follows. The RecF protein is involved in DNA metabolism; it is required for DNA replication and normal SOS inducibility. RecF binds preferentially to single-stranded, linear DNA. It also seems to bind ATP. This Sodalis glossinidius protein is DNA replication and repair protein RecF.